The chain runs to 162 residues: CASP-like protein BLE3 (162 aa).

Residues 1 to 7 lie on the Cytoplasmic side of the membrane; sequence MAKVHRL. Residues 8–28 form a helical membrane-spanning segment; it reads MNAVLRLAAAAAAATAAVVMV. At 29-50 the chain is on the extracellular side; it reads TSRETTSFFGIQMEAKYSYTPS. Residues 51–71 form a helical membrane-spanning segment; it reads FIFFVVAYAVAAAYSLLVLAV. Residues 72-85 are Cytoplasmic-facing; sequence PAGSALSRLALTTD. A helical transmembrane segment spans residues 86–106; it reads VVLGMVLAGAVASAGAISDIA. Residues 107-128 lie on the Extracellular side of the membrane; it reads KNGNSHAGWLPVCGQIHAYCNH. The chain crosses the membrane as a helical span at residues 129-149; sequence VMAALIAGFVALAVHFVVVMY. At 150–162 the chain is on the cytoplasmic side; the sequence is SLHIVTDVICPCH.

This sequence belongs to the Casparian strip membrane proteins (CASP) family. As to quaternary structure, homodimer and heterodimers.

It localises to the cell membrane. Its function is as follows. Involved in cell elongation in rice through dual regulation by brassinolide and auxin. In Oryza sativa subsp. indica (Rice), this protein is CASP-like protein BLE3 (BLE3).